The sequence spans 104 residues: Defensin-2 (104 aa).

A signal peptide spans 1–19 (MKFFVLFAILIAIVHASCA). Intrachain disulfides connect Cys-64-Cys-95, Cys-81-Cys-100, and Cys-85-Cys-102.

This sequence belongs to the invertebrate defensin family. Type 1 subfamily. As to expression, low expression in head and thorax.

Its subcellular location is the secreted. Its function is as follows. Antibacterial peptide mostly active against Gram-positive bacteria. This chain is Defensin-2, found in Apis mellifera (Honeybee).